We begin with the raw amino-acid sequence, 298 residues long: H-2 class I histocompatibility antigen, alpha chain (298 aa).

Over 1–244 (RYEPRARWIE…EPPSSTKTNT (244 aa)) the chain is Extracellular. N-linked (GlcNAc...) asparagine glycosylation occurs at asparagine 43. Cysteine 58 and cysteine 121 form a disulfide bridge. An N-linked (GlcNAc...) asparagine glycan is attached at asparagine 133. The Ig-like C1-type domain maps to 142–230 (PKAHVTHHRR…EGLPEPLTLR (89 aa)). Cysteines 160 and 216 form a disulfide. A helical transmembrane segment spans residues 245–265 (VIIAVPVVLGAVVILGAVMAF). At 266–298 (VMKRRRNTGGKGGDYALAPVSQSSDMSLPDCKV) the chain is on the cytoplasmic side. Residues 277 to 298 (GGDYALAPVSQSSDMSLPDCKV) form a disordered region. 2 positions are modified to phosphoserine: serine 289 and serine 292.

This sequence belongs to the MHC class I family. Heterodimer of an alpha chain and a beta chain (beta-2-microglobulin).

The protein resides in the membrane. Functionally, involved in the presentation of foreign antigens to the immune system. The polypeptide is H-2 class I histocompatibility antigen, alpha chain (H2-D1) (Mus musculus (Mouse)).